Reading from the N-terminus, the 269-residue chain is Formamidopyrimidine-DNA glycosylase (269 aa).

The active-site Schiff-base intermediate with DNA is proline 2. The active-site Proton donor is the glutamate 3. The active-site Proton donor; for beta-elimination activity is the lysine 57. 3 residues coordinate DNA: histidine 90, arginine 109, and lysine 150. The segment at 235-269 adopts an FPG-type zinc-finger fold; sequence QVYGRHGEPCYTCGEFIQIAKYGQRSSFFCPSCQN. The active-site Proton donor; for delta-elimination activity is the arginine 259.

Belongs to the FPG family. As to quaternary structure, monomer. Zn(2+) serves as cofactor.

It catalyses the reaction Hydrolysis of DNA containing ring-opened 7-methylguanine residues, releasing 2,6-diamino-4-hydroxy-5-(N-methyl)formamidopyrimidine.. The enzyme catalyses 2'-deoxyribonucleotide-(2'-deoxyribose 5'-phosphate)-2'-deoxyribonucleotide-DNA = a 3'-end 2'-deoxyribonucleotide-(2,3-dehydro-2,3-deoxyribose 5'-phosphate)-DNA + a 5'-end 5'-phospho-2'-deoxyribonucleoside-DNA + H(+). Functionally, involved in base excision repair of DNA damaged by oxidation or by mutagenic agents. Acts as a DNA glycosylase that recognizes and removes damaged bases. Has a preference for oxidized purines, such as 7,8-dihydro-8-oxoguanine (8-oxoG). Has AP (apurinic/apyrimidinic) lyase activity and introduces nicks in the DNA strand. Cleaves the DNA backbone by beta-delta elimination to generate a single-strand break at the site of the removed base with both 3'- and 5'-phosphates. The sequence is that of Formamidopyrimidine-DNA glycosylase from Baumannia cicadellinicola subsp. Homalodisca coagulata.